The chain runs to 82 residues: Large ribosomal subunit protein bL31B (82 aa).

This sequence belongs to the bacterial ribosomal protein bL31 family. Type B subfamily. As to quaternary structure, part of the 50S ribosomal subunit.

The protein is Large ribosomal subunit protein bL31B of Pectobacterium atrosepticum (strain SCRI 1043 / ATCC BAA-672) (Erwinia carotovora subsp. atroseptica).